Consider the following 156-residue polypeptide: ATP synthase subunit b (156 aa).

Residues 12–32 (VAFLIFVLFCMKFIWPPVIAA) form a helical membrane-spanning segment.

Belongs to the ATPase B chain family. F-type ATPases have 2 components, F(1) - the catalytic core - and F(0) - the membrane proton channel. F(1) has five subunits: alpha(3), beta(3), gamma(1), delta(1), epsilon(1). F(0) has three main subunits: a(1), b(2) and c(10-14). The alpha and beta chains form an alternating ring which encloses part of the gamma chain. F(1) is attached to F(0) by a central stalk formed by the gamma and epsilon chains, while a peripheral stalk is formed by the delta and b chains.

Its subcellular location is the cell inner membrane. Its function is as follows. F(1)F(0) ATP synthase produces ATP from ADP in the presence of a proton or sodium gradient. F-type ATPases consist of two structural domains, F(1) containing the extramembraneous catalytic core and F(0) containing the membrane proton channel, linked together by a central stalk and a peripheral stalk. During catalysis, ATP synthesis in the catalytic domain of F(1) is coupled via a rotary mechanism of the central stalk subunits to proton translocation. In terms of biological role, component of the F(0) channel, it forms part of the peripheral stalk, linking F(1) to F(0). The chain is ATP synthase subunit b from Pseudomonas fluorescens (strain ATCC BAA-477 / NRRL B-23932 / Pf-5).